The primary structure comprises 537 residues: CTP synthase (537 aa).

The interval 1 to 265 is amidoligase domain; that stretch reads MVHFIFVTGG…DNKVLKFFNI (265 aa). Serine 13 is a binding site for CTP. Position 13 (serine 13) interacts with UTP. ATP is bound by residues 14-19 and aspartate 71; that span reads SLGKGL. Aspartate 71 and glutamate 139 together coordinate Mg(2+). Residues 146–148 and lysine 222 contribute to the CTP site; that span reads DIE. Residue lysine 222 participates in UTP binding. In terms of domain architecture, Glutamine amidotransferase type-1 spans 290 to 536; it reads RIAIIAKYHK…IKAAIEYNKC (247 aa). Glycine 352 lines the L-glutamine pocket. Cysteine 379 functions as the Nucleophile; for glutamine hydrolysis in the catalytic mechanism. L-glutamine contacts are provided by residues 380 to 383, glutamate 403, and arginine 464; that span reads FGMQ. Catalysis depends on residues histidine 509 and glutamate 511.

The protein belongs to the CTP synthase family. Homotetramer.

It catalyses the reaction UTP + L-glutamine + ATP + H2O = CTP + L-glutamate + ADP + phosphate + 2 H(+). The catalysed reaction is L-glutamine + H2O = L-glutamate + NH4(+). The enzyme catalyses UTP + NH4(+) + ATP = CTP + ADP + phosphate + 2 H(+). Its pathway is pyrimidine metabolism; CTP biosynthesis via de novo pathway; CTP from UDP: step 2/2. With respect to regulation, allosterically activated by GTP, when glutamine is the substrate; GTP has no effect on the reaction when ammonia is the substrate. The allosteric effector GTP functions by stabilizing the protein conformation that binds the tetrahedral intermediate(s) formed during glutamine hydrolysis. Inhibited by the product CTP, via allosteric rather than competitive inhibition. Its function is as follows. Catalyzes the ATP-dependent amination of UTP to CTP with either L-glutamine or ammonia as the source of nitrogen. Regulates intracellular CTP levels through interactions with the four ribonucleotide triphosphates. In Rickettsia peacockii (strain Rustic), this protein is CTP synthase.